A 99-amino-acid chain; its full sequence is (4S)-4-hydroxy-5-phosphonooxypentane-2,3-dione isomerase (99 aa).

The region spanning 2–91 (HVTLVEINVK…ISEPRKKRSF (90 aa)) is the ABM domain.

This sequence belongs to the LsrG family. Homodimer.

The protein resides in the cytoplasm. It catalyses the reaction (2S)-2-hydroxy-3,4-dioxopentyl phosphate = 3-hydroxy-2,4-dioxopentyl phosphate. In terms of biological role, involved in the degradation of phospho-AI-2, thereby terminating induction of the lsr operon and closing the AI-2 signaling cycle. Catalyzes the conversion of (4S)-4-hydroxy-5-phosphonooxypentane-2,3-dione (P-DPD) to 3-hydroxy-5-phosphonooxypentane-2,4-dione (P-HPD). The polypeptide is (4S)-4-hydroxy-5-phosphonooxypentane-2,3-dione isomerase (Photorhabdus laumondii subsp. laumondii (strain DSM 15139 / CIP 105565 / TT01) (Photorhabdus luminescens subsp. laumondii)).